A 517-amino-acid chain; its full sequence is Putative succinate-semialdehyde dehydrogenase [NADP(+)] (517 aa).

NADP(+)-binding positions include W157 to N158, K181 to S184, and G232 to S233. Catalysis depends on E254, which acts as the Proton acceptor. L255 is a binding site for NADP(+). C288 serves as the catalytic Nucleophile. E386 contacts NADP(+).

This sequence belongs to the aldehyde dehydrogenase family.

It carries out the reaction succinate semialdehyde + NADP(+) + H2O = succinate + NADPH + 2 H(+). Functionally, catalyzes the NADP(+)-dependent oxidation of succinate semialdehyde to succinate. Although it has succinate semialdehyde dehydrogenase activity, is likely to act physiologically on a different aldehyde(s). The chain is Putative succinate-semialdehyde dehydrogenase [NADP(+)] (gabD2) from Mycolicibacterium smegmatis (strain ATCC 700084 / mc(2)155) (Mycobacterium smegmatis).